The chain runs to 266 residues: tRNA pseudouridine synthase A (266 aa).

D52 acts as the Nucleophile in catalysis. Position 113 (Y113) interacts with substrate.

It belongs to the tRNA pseudouridine synthase TruA family. As to quaternary structure, homodimer.

The enzyme catalyses uridine(38/39/40) in tRNA = pseudouridine(38/39/40) in tRNA. In terms of biological role, formation of pseudouridine at positions 38, 39 and 40 in the anticodon stem and loop of transfer RNAs. This chain is tRNA pseudouridine synthase A, found in Agrobacterium fabrum (strain C58 / ATCC 33970) (Agrobacterium tumefaciens (strain C58)).